We begin with the raw amino-acid sequence, 960 residues long: Endosome/lysosome-associated apoptosis and autophagy regulator family member 2 (960 aa).

The interval 1-26 (MLFLRPGPARGRGRGRPARAPHSGLS) is disordered. A signal peptide spans 1–44 (MLFLRPGPARGRGRGRPARAPHSGLSPPWSPAWICCWALAGCQA). At 45-860 (AWAGAGDLPS…TCETVDFWLK (816 aa)) the chain is on the extracellular side. A glycan (N-linked (GlcNAc...) asparagine) is linked at asparagine 171. Cystine bridges form between cysteine 295–cysteine 312, cysteine 325–cysteine 348, and cysteine 328–cysteine 360. 2 N-linked (GlcNAc...) asparagine glycosylation sites follow: asparagine 407 and asparagine 622. The 212-residue stretch at 597 to 808 (PTCPYIRSMA…LWESVEACPL (212 aa)) folds into the MRH domain. 4 disulfides stabilise this stretch: cysteine 599–cysteine 651, cysteine 661–cysteine 689, cysteine 758–cysteine 794, and cysteine 770–cysteine 806. Residues 861-881 (VGAGVGAFTAVLLVALTCYFW) form a helical membrane-spanning segment. The Cytoplasmic portion of the chain corresponds to 882–960 (KKNQKLEYKY…QLKSSRSPNI (79 aa)). Phosphoserine is present on serine 949.

This sequence belongs to the ELAPOR family.

The protein resides in the cell membrane. In terms of biological role, functions as a regulator of the BMP signaling pathway and may be involved in epidermal differentiation. This is Endosome/lysosome-associated apoptosis and autophagy regulator family member 2 from Bos taurus (Bovine).